Here is a 379-residue protein sequence, read N- to C-terminus: Flagellin A (379 aa).

2 coiled-coil regions span residues 104–129 and 314–341; these read NSAS…IAET and QNRL…IKDT.

The protein belongs to the bacterial flagellin family. As to quaternary structure, heteromer of multiple flagellin subunits including FlaA, FlaB, FlaC, FlaD and FlaE.

The protein resides in the secreted. The protein localises to the bacterial flagellum. In terms of biological role, flagellin is the subunit protein which polymerizes to form the filaments of bacterial flagella. FlaA is required to form a core or scaffold into which the other flagellins are inserted to provide structural integrity. Essential for flagellar synthesis and motility; important for full virulence. The chain is Flagellin A (flaA) from Vibrio cholerae serotype O1 (strain ATCC 39541 / Classical Ogawa 395 / O395).